The primary structure comprises 362 residues: Peptide chain release factor 1 (362 aa).

Glutamine 237 carries the post-translational modification N5-methylglutamine.

This sequence belongs to the prokaryotic/mitochondrial release factor family. Post-translationally, methylated by PrmC. Methylation increases the termination efficiency of RF1.

It is found in the cytoplasm. Functionally, peptide chain release factor 1 directs the termination of translation in response to the peptide chain termination codons UAG and UAA. The polypeptide is Peptide chain release factor 1 (Marinomonas sp. (strain MWYL1)).